We begin with the raw amino-acid sequence, 154 residues long: Endoribonuclease YbeY (154 aa).

Residues His-113, His-117, and His-123 each contribute to the Zn(2+) site.

Belongs to the endoribonuclease YbeY family. Zn(2+) is required as a cofactor.

The protein resides in the cytoplasm. Its function is as follows. Single strand-specific metallo-endoribonuclease involved in late-stage 70S ribosome quality control and in maturation of the 3' terminus of the 16S rRNA. This chain is Endoribonuclease YbeY, found in Vibrio campbellii (strain ATCC BAA-1116).